A 116-amino-acid chain; its full sequence is Large ribosomal subunit protein uL18 (116 aa).

It belongs to the universal ribosomal protein uL18 family. As to quaternary structure, part of the 50S ribosomal subunit; part of the 5S rRNA/L5/L18/L25 subcomplex. Contacts the 5S and 23S rRNAs.

This is one of the proteins that bind and probably mediate the attachment of the 5S RNA into the large ribosomal subunit, where it forms part of the central protuberance. This chain is Large ribosomal subunit protein uL18, found in Shewanella putrefaciens (strain CN-32 / ATCC BAA-453).